Reading from the N-terminus, the 184-residue chain is Flavin prenyltransferase UbiX (184 aa).

FMN-binding positions include 9-11 (GAS), serine 34, 85-88 (SMKT), and arginine 120. Dimethylallyl phosphate-binding residues include tyrosine 150 and arginine 166.

This sequence belongs to the UbiX/PAD1 family.

It carries out the reaction dimethylallyl phosphate + FMNH2 = prenylated FMNH2 + phosphate. Flavin prenyltransferase that catalyzes the synthesis of the prenylated FMN cofactor (prenyl-FMN) for 4-hydroxy-3-polyprenylbenzoic acid decarboxylase UbiD. The prenyltransferase is metal-independent and links a dimethylallyl moiety from dimethylallyl monophosphate (DMAP) to the flavin N5 and C6 atoms of FMN. The chain is Flavin prenyltransferase UbiX from Methanocaldococcus jannaschii (strain ATCC 43067 / DSM 2661 / JAL-1 / JCM 10045 / NBRC 100440) (Methanococcus jannaschii).